Consider the following 274-residue polypeptide: 2,3,4,5-tetrahydropyridine-2,6-dicarboxylate N-succinyltransferase (274 aa).

Substrate is bound by residues Arg104 and Asp141.

This sequence belongs to the transferase hexapeptide repeat family. As to quaternary structure, homotrimer.

Its subcellular location is the cytoplasm. The catalysed reaction is (S)-2,3,4,5-tetrahydrodipicolinate + succinyl-CoA + H2O = (S)-2-succinylamino-6-oxoheptanedioate + CoA. It participates in amino-acid biosynthesis; L-lysine biosynthesis via DAP pathway; LL-2,6-diaminopimelate from (S)-tetrahydrodipicolinate (succinylase route): step 1/3. This Salmonella typhi protein is 2,3,4,5-tetrahydropyridine-2,6-dicarboxylate N-succinyltransferase.